Here is a 248-residue protein sequence, read N- to C-terminus: Aspartate/glutamate leucyltransferase (248 aa).

The protein belongs to the R-transferase family. Bpt subfamily.

The protein resides in the cytoplasm. The enzyme catalyses N-terminal L-glutamyl-[protein] + L-leucyl-tRNA(Leu) = N-terminal L-leucyl-L-glutamyl-[protein] + tRNA(Leu) + H(+). The catalysed reaction is N-terminal L-aspartyl-[protein] + L-leucyl-tRNA(Leu) = N-terminal L-leucyl-L-aspartyl-[protein] + tRNA(Leu) + H(+). Its function is as follows. Functions in the N-end rule pathway of protein degradation where it conjugates Leu from its aminoacyl-tRNA to the N-termini of proteins containing an N-terminal aspartate or glutamate. This is Aspartate/glutamate leucyltransferase from Methylobacterium sp. (strain 4-46).